The primary structure comprises 216 residues: Protein Syd (216 aa).

Belongs to the Syd family.

It localises to the cell inner membrane. Interacts with the SecY protein in vivo. May bind preferentially to an uncomplexed state of SecY, thus functioning either as a chelating agent for excess SecY in the cell or as a regulatory factor that negatively controls the translocase function. This Shewanella baltica (strain OS185) protein is Protein Syd.